The following is a 541-amino-acid chain: Mesoderm induction early response protein 2 (541 aa).

The residue at position 11 (Ser-11) is a Phosphoserine. Disordered stretches follow at residues 100 to 119 (DPISEQESEGGDTAPALPDM) and 131 to 186 (LSGE…EEDA). A compositionally biased stretch (polar residues) spans 140 to 165 (QSSADDLTPSVTSHEASDLFHNQSGS). An ELM2 domain is found at 194–291 (KEIMVGPQFQ…EALRRLRFNV (98 aa)). Positions 296–348 (DGLCAWSEEECRNFEHGFRVHGKNFHLIQANKVRTRSVGECVEYYYLWKKSER) constitute an SANT domain. The interval 364–440 (VSSGTTDTEQ…EPPAVPSLQQ (77 aa)) is disordered.

Part of a complex containing at least CDYL, MIER1, MIER2, HDAC1 and HDAC2.

The protein resides in the nucleus. In terms of biological role, transcriptional repressor. In Mus musculus (Mouse), this protein is Mesoderm induction early response protein 2 (Mier2).